The sequence spans 2562 residues: Zinc finger homeobox protein 2 (2562 aa).

Polar residues predominate over residues 1–13 (MATLNSASPSGTV). 2 disordered regions span residues 1–88 (MATL…PPKD) and 337–410 (PSPP…DPPP). Residues 56 to 73 (GGERLESGSDLDPPKEIG) show a composition bias toward basic and acidic residues. 2 C2H2-type zinc fingers span residues 446 to 469 (LKCPKCNWHYKYQQTLDVHMREKH) and 501 to 525 (YRCDVCNYSTTTKGNLSIHMQSDKH). 3 disordered regions span residues 530–559 (QGFQAGPGGQASPPEASLPPTSVGDKEPKT), 603–651 (PPGL…PDKP), and 669–705 (RKFPTAAPGSLSPETHLPPSQLLGSSSDGLPTSPSPD). Pro residues predominate over residues 609 to 622 (PGPPPPPGAAPTNP). The span at 690–704 (LLGSSSDGLPTSPSP) shows a compositional bias: polar residues. 3 C2H2-type zinc fingers span residues 752 to 776 (HRCKLCCYGTQLKANFQLHLKTDKH), 815 to 839 (LRCNICDFESNSKEKMQLHTRGSAH), and 864 to 888 (YHCLLCAWDTPSRLALLQHLRTPAH). A disordered region spans residues 923-966 (RLQTPGKASDTPLAQPPTSEKDAQNKTEQQASEVTEDRSGPPRD). The segment at 1003–1026 (YRCPLCQEQLVGRPALHFHLSHLH) adopts a C2H2-type 6 zinc-finger fold. 2 disordered regions span residues 1058–1126 (NPVE…PAPR) and 1140–1166 (MSEEEEGAMGEPRSAEPTPADSRHPLT). Pro residues-rich tracts occupy residues 1091–1101 (SPDPPLEPPLA) and 1114–1124 (DQPPSPAPSPA). C2H2-type zinc fingers lie at residues 1185–1211 (YKCTVCKESFTQKNILLVHYNSVSHLH) and 1242–1266 (FKCTVCRVSYNQSSTLEIHMRSVLH). The segment covering 1278–1305 (RAEGAERGQEEFKEGETEGEAGTEKKGP) has biased composition (basic and acidic residues). The interval 1278–1313 (RAEGAERGQEEFKEGETEGEAGTEKKGPDPGGFMSG) is disordered. The C2H2-type 9 zinc-finger motif lies at 1474-1497 (LACGACGKLFSNMLILKTHEEHVH). The interval 1520–1584 (LYPPPVEPPK…EGSRGSLPPA (65 aa)) is disordered. Over residues 1521 to 1531 (YPPPVEPPKPP) the composition is skewed to pro residues. A DNA-binding region (homeobox 1) is located at residues 1589–1648 (RRFSRTKFTEFQTQALQSFFETSAYPKDGEVERLASLLGLASRVVVVWFQNARQKARKNA). Residues 1664 to 1687 (SGCRRCHATFACVFELVRHLKKCY) form a C2H2-type 10; degenerate zinc finger. The interval 1689–1760 (DQPPEEEEEA…EGKAPPSPPV (72 aa)) is disordered. The span at 1690–1713 (QPPEEEEEAERGEEEEEVEEEEAE) shows a compositional bias: acidic residues. Basic and acidic residues predominate over residues 1743–1752 (TRPESKESEG). Residues 1761–1783 (YACDQCAASFPSQDLLTTHHRLH) form a C2H2-type 11 zinc finger. Disordered stretches follow at residues 1814–1853 (SGTSSVTGTPLKRKHDDGSLSPTGSEAGGGGEGEPPKDKR), 1907–1934 (RKGQFRSTPGGVAGPAVKPTVPPSPAPF), 1971–2057 (PLPF…DSMG), 2114–2136 (KKAKLQGTAPPGSGGSSEGTSAA), 2186–2210 (PAPETPLAPKGPPATTPASSVPLGA), 2263–2313 (QTAG…PNSS), and 2391–2429 (LQQPPQAPEPTATAPPKPPELPASGEGESSEADELLTGS). Positions 1851–1910 (DKRLRTTILPEQLEILYRWYMQDSNPTRKMLDCISEEVGLKKRVVQVWFQNTRARERKGQ) form a DNA-binding region, homeobox 2. Residues 1985-1996 (TPEPPPPLPPPA) are compositionally biased toward pro residues. A compositionally biased stretch (low complexity) spans 2008-2037 (KASPESEACSPSAGDLSDSSASSLAEPESP). Residues 2038–2051 (GAGGTSGGPGGGTG) are compositionally biased toward gly residues. The segment at residues 2058-2117 (QRRYRTQMSSLQLKIMKACYEAYRTPTMQECEVLGEEIGLPKRVIQVWFQNARAKEKKAK) is a DNA-binding region (homeobox 3). Residues 2188–2200 (PETPLAPKGPPAT) are compositionally biased toward pro residues. Residues 2275–2286 (PVSNQTNSSTDP) are compositionally biased toward polar residues. Positions 2295–2305 (SGDKVSGERKP) are enriched in basic and acidic residues. Positions 2395–2411 (PQAPEPTATAPPKPPEL) are enriched in pro residues. A C2H2-type 12; degenerate zinc finger spans residues 2441–2461 (YLCRQCKMAFDGEAPATAHQR). A C2H2-type 13 zinc finger spans residues 2485–2509 (YHCLACEVLLSGREALASHLRSSAH). Disordered stretches follow at residues 2506-2525 (SSAHRRKAAPPPGGPPITVT) and 2540-2562 (EEARLPHTDPNPKTTTTSTLLAL). The segment covering 2553–2562 (TTTTSTLLAL) has biased composition (low complexity).

As to expression, expressed in brain (at protein level). Expressed at the highest levels in the pyramidal cell layer of the hippocampus, the suprachiasmatic nucleus, laterodorsal thalamic nucleus, lateral geniculate nucleus, substantia nigra pars compacta, and magnocellular part of the red nucleus (at protein level). Highly expressed in dorsal root ganglia. Expressed at lower levels in kidney, stomach, liver, heart and testis.

It localises to the nucleus. Transcriptional regulator that is critical for the regulation of pain perception and processing of noxious stimuli. The chain is Zinc finger homeobox protein 2 from Mus musculus (Mouse).